We begin with the raw amino-acid sequence, 308 residues long: Olfactory receptor 8D1 (308 aa).

At 1–25 (MTMENYSMAAQFVLDGLTQQAELQL) the chain is on the extracellular side. A glycan (N-linked (GlcNAc...) asparagine) is linked at Asn-5. The helical transmembrane segment at 26–46 (PLFLLFLGIYVVTVVGNLGMI) threads the bilayer. Residues 47-54 (LLIAVSPL) lie on the Cytoplasmic side of the membrane. A helical membrane pass occupies residues 55 to 75 (LHTPMYYFLSSLSFVDFCYSS). Over 76–99 (VITPKMLVNFLGKKNTILYSECMV) the chain is Extracellular. Cysteines 97 and 189 form a disulfide. The helical transmembrane segment at 100-120 (QLFFFVVFVVAEGYLLTAMAY) threads the bilayer. Over 121–139 (DRYVAICSPLLYNAIMSSW) the chain is Cytoplasmic. Residues 140-160 (VCSLLVLAAFFLGFLSALTHT) form a helical membrane-spanning segment. Residues 161–197 (SAMMKLSFCKSHIINHYFCDVLPLLNLSCSNTHLNEL) lie on the Extracellular side of the membrane. Asn-186 is a glycosylation site (N-linked (GlcNAc...) asparagine). A helical transmembrane segment spans residues 198–217 (LLFIIAGFNTLVPTLAVAVS). At 218 to 237 (YAFILYSILHIRSSEGRSKA) the chain is on the cytoplasmic side. Residues 238–258 (FGTCSSHLMAVVIFFGSITFM) form a helical membrane-spanning segment. Residues 259–271 (YFKPPSSNSLDQE) are Extracellular-facing. A helical membrane pass occupies residues 272–292 (KVSSVFYTTVIPMLNPLIYSL). Topologically, residues 293 to 308 (RNKDVKKALRKVLVGK) are cytoplasmic.

The protein belongs to the G-protein coupled receptor 1 family. Expressed in the tongue.

It localises to the cell membrane. In terms of biological role, odorant receptor (Potential). May be involved in taste perception. The protein is Olfactory receptor 8D1 (OR8D1) of Homo sapiens (Human).